Consider the following 525-residue polypeptide: GMP synthase [glutamine-hydrolyzing] (525 aa).

Residues 9-207 (RILILDFGSQ…VLGICGCEAL (199 aa)) form the Glutamine amidotransferase type-1 domain. Cysteine 86 acts as the Nucleophile in catalysis. Active-site residues include histidine 181 and glutamate 183. A GMPS ATP-PPase domain is found at 208–400 (WTSATIIEDA…LGLPYDMLYR (193 aa)). 235–241 (SGGVDSS) contacts ATP.

Homodimer.

It carries out the reaction XMP + L-glutamine + ATP + H2O = GMP + L-glutamate + AMP + diphosphate + 2 H(+). Its pathway is purine metabolism; GMP biosynthesis; GMP from XMP (L-Gln route): step 1/1. Its function is as follows. Catalyzes the synthesis of GMP from XMP. This is GMP synthase [glutamine-hydrolyzing] from Yersinia pestis bv. Antiqua (strain Antiqua).